Reading from the N-terminus, the 475-residue chain is Dynein regulatory complex subunit 4 (475 aa).

The segment at 1–22 (MPPKRKSSPKGKTPTVVDGLST) is disordered. Residues 1 to 113 (MPPKRKSSPK…LLYEQQNMLS (113 aa)) form a regulates microtubule-binding region. Coiled-coil stretches lie at residues 20-104 (LSTE…VKHL), 142-200 (RSLK…QEEE), and 242-426 (KNLD…VARV). A microtubule-binding region spans residues 114 to 257 (ELKAESIIST…TSLKEELKEM (144 aa)).

Belongs to the DRC4 family. As to quaternary structure, component of the nexin-dynein regulatory complex (N-DRC). Interacts with microtubules.

It localises to the cytoplasm. The protein resides in the cytoskeleton. Its subcellular location is the cell projection. The protein localises to the cilium. It is found in the flagellum. It localises to the cilium axoneme. The protein resides in the cilium basal body. Its subcellular location is the golgi apparatus. The protein localises to the flagellum axoneme. Functionally, component of the nexin-dynein regulatory complex (N-DRC), a key regulator of ciliary/flagellar motility which maintains the alignment and integrity of the distal axoneme and regulates microtubule sliding in motile axonemes. Plays an important role in the assembly of the N-DRC linker. Plays dual roles at both the primary (or non-motile) cilia to regulate hedgehog signaling and in motile cilia to coordinate cilia movement. Required for proper slow muscle development and positively regulates ciliary smoothened (SMO)-dependent Hedgehog (Hh) signaling pathway. Required for tether cilia motility which is essential for normal otolith formation and localization in the developing inner ear. The polypeptide is Dynein regulatory complex subunit 4 (gas8) (Danio rerio (Zebrafish)).